Consider the following 61-residue polypeptide: Large ribosomal subunit protein eL20 (61 aa).

This sequence belongs to the eukaryotic ribosomal protein eL20 family. Part of the 50S ribosomal subunit. Binds 23S rRNA.

The sequence is that of Large ribosomal subunit protein eL20 from Methanosarcina mazei (strain ATCC BAA-159 / DSM 3647 / Goe1 / Go1 / JCM 11833 / OCM 88) (Methanosarcina frisia).